Consider the following 534-residue polypeptide: Beta-1,2-xylosyltransferase (534 aa).

The Cytoplasmic portion of the chain corresponds to 1-11 (MSKRNPKILKI). A helical; Signal-anchor for type II membrane protein membrane pass occupies residues 12–34 (FLYMLLLNSLFLIIYFVFHSSSF). At 35–534 (SPEQSQPPHI…LTEIMKSLGC (500 aa)) the chain is on the lumenal side. Residues Asn-51, Asn-301, and Asn-479 are each glycosylated (N-linked (GlcNAc...) asparagine).

In terms of processing, glycosylation at least at one of the two sites Asn-51 and Asn-301 is necessary for enzyme stability and activity.

Its subcellular location is the golgi apparatus membrane. The enzyme catalyses N(4)-{beta-D-GlcNAc-(1-&gt;2)-alpha-D-Man-(1-&gt;3)-[beta-D-GlcNAc-(1-&gt;2)-alpha-D-Man-(1-&gt;6)]-beta-D-Man-(1-&gt;4)-beta-D-GlcNAc-(1-&gt;4)-beta-D-GlcNAc}-L-asparaginyl-[protein] + UDP-alpha-D-xylose = N(4)-{beta-D-GlcNAc-(1-&gt;2)-alpha-D-Man-(1-&gt;3)-[beta-D-GlcNAc-(1-&gt;2)-alpha-D-Man-(1-&gt;6)]-[beta-D-Xyl-(1-&gt;2)]-beta-D-Man-(1-&gt;4)-beta-D-GlcNAc-(1-&gt;4)-beta-D-GlcNAc}-L-asparaginyl-[protein] + UDP + H(+). It functions in the pathway protein modification; protein glycosylation. In terms of biological role, glycosyltransferase involved in the xylosylation of N-glycans. Possesses beta-1,2-xylosyltransferase activity, transferring xylose from UDP-xylose to the core beta-linked mannose of N-glycans. Involved in the biosynthesis of glycoprotein bound N-glycans. Does not require metal ions for its activity. This is Beta-1,2-xylosyltransferase from Arabidopsis thaliana (Mouse-ear cress).